Consider the following 118-residue polypeptide: MFARLSTALLAFTLATAVVAAPGGRPSEVEYEQCNGGEIQCCNSYQKADSLDYNTSKLLGLLNIDVKQITAGVGLTCTGINAVGIGGGSSCTQQKVCCTNNKFNGVVALGCSPINVSL.

The N-terminal stretch at 1–20 is a signal peptide; that stretch reads MFARLSTALLAFTLATAVVA. 4 disulfides stabilise this stretch: C34/C97, C41/C91, C42/C77, and C98/C111. N-linked (GlcNAc...) asparagine glycosylation occurs at N54. An N-linked (GlcNAc...) asparagine glycan is attached at N115.

This sequence belongs to the fungal hydrophobin family. As to quaternary structure, self-assembles to form functional amyloid fibrils called rodlets. Self-assembly into fibrillar rodlets occurs spontaneously at hydrophobic:hydrophilic interfaces and the rodlets further associate laterally to form amphipathic monolayers.

The protein localises to the secreted. It localises to the cell wall. In terms of biological role, aerial growth, conidiation, and dispersal of filamentous fungi in the environment rely upon a capability of their secreting small amphipathic proteins called hydrophobins (HPBs) with low sequence identity. Class I can self-assemble into an outermost layer of rodlet bundles on aerial cell surfaces, conferring cellular hydrophobicity that supports fungal growth, development and dispersal; whereas Class II form highly ordered films at water-air interfaces through intermolecular interactions but contribute nothing to the rodlet structure. This is Class I hydrophobin 1 from Coprinopsis cinerea (strain Okayama-7 / 130 / ATCC MYA-4618 / FGSC 9003) (Inky cap fungus).